A 355-amino-acid polypeptide reads, in one-letter code: NADH dehydrogenase-like protein YutJ (355 aa).

It belongs to the NADH dehydrogenase family. FAD is required as a cofactor.

The sequence is that of NADH dehydrogenase-like protein YutJ (yutJ) from Bacillus subtilis (strain 168).